Here is a 276-residue protein sequence, read N- to C-terminus: Large ribosomal subunit protein uL2 (276 aa).

Residues 224–276 form a disordered region; that stretch reads AMNPIDHPHGGGEGKTSGGRNPVTPWGVPTKGKKTRKRNKSSNKYIKRVSDKG. Residues 254 to 270 are compositionally biased toward basic residues; that stretch reads KGKKTRKRNKSSNKYIK.

It belongs to the universal ribosomal protein uL2 family. Part of the 50S ribosomal subunit. Forms a bridge to the 30S subunit in the 70S ribosome.

Its function is as follows. One of the primary rRNA binding proteins. Required for association of the 30S and 50S subunits to form the 70S ribosome, for tRNA binding and peptide bond formation. It has been suggested to have peptidyltransferase activity; this is somewhat controversial. Makes several contacts with the 16S rRNA in the 70S ribosome. This chain is Large ribosomal subunit protein uL2, found in Ehrlichia canis (strain Jake).